We begin with the raw amino-acid sequence, 473 residues long: Glutamate--tRNA ligase (473 aa).

A 'HIGH' region motif is present at residues 9-19 (PSPTGELHLGS). Positions 237–241 (KLSKK) match the 'KMSKS' region motif. Lys240 lines the ATP pocket.

It belongs to the class-I aminoacyl-tRNA synthetase family. Glutamate--tRNA ligase type 1 subfamily. Monomer.

Its subcellular location is the cytoplasm. The catalysed reaction is tRNA(Glu) + L-glutamate + ATP = L-glutamyl-tRNA(Glu) + AMP + diphosphate. Functionally, catalyzes the attachment of glutamate to tRNA(Glu) in a two-step reaction: glutamate is first activated by ATP to form Glu-AMP and then transferred to the acceptor end of tRNA(Glu). The sequence is that of Glutamate--tRNA ligase from Wigglesworthia glossinidia brevipalpis.